Reading from the N-terminus, the 780-residue chain is GATOR2 complex protein WDR24 (780 aa).

WD repeat units lie at residues 67 to 107 (SLNF…RNKQ), 113 to 153 (EHKR…SVST), 156 to 196 (GQSE…RCER), 200 to 240 (AHNG…AKEI), 244 to 286 (QTIA…IPFA), and 290 to 333 (EHKD…IDRA). Residues 708–730 (NCSNCKRPMSNKGWICDRCRQCA) form a C4-type zinc finger. Positions 709, 712, 723, 726, 733, 736, 747, 750, 752, 755, 758, 769, 773, 775, and 777 each coordinate Zn(2+). Residues 731–780 (SMCAVCHHVVKGLFVWCQGCCHGGHLQHIMNWMQNNCYCPAGCGHVCEYS) form an RING-type; atypical zinc finger.

It belongs to the WD repeat WDR24 family. In terms of assembly, component of the GATOR2 subcomplex, composed of MIOS, SEC13, SEH1L, WDR24 and WDR59. The GATOR2 complex interacts with CASTOR1 and CASTOR2; the interaction is negatively regulated by arginine. The GATOR2 complex interacts with SESN1, SESN2 and SESN3; the interaction is negatively regulated by amino acids.

The protein localises to the lysosome membrane. The catalysed reaction is S-ubiquitinyl-[E2 ubiquitin-conjugating enzyme]-L-cysteine + [acceptor protein]-L-lysine = [E2 ubiquitin-conjugating enzyme]-L-cysteine + N(6)-ubiquitinyl-[acceptor protein]-L-lysine.. Its pathway is protein modification; protein ubiquitination. Its activity is regulated as follows. The GATOR2 complex is negatively regulated by the upstream amino acid sensors CASTOR1 and SESN2, which sequester the GATOR2 complex in absence of amino acids. In the presence of abundant amino acids, GATOR2 is released from CASTOR1 and SESN2 and activated. Its function is as follows. Catalytic component of the GATOR2 complex, a multiprotein complex that acts as an activator of the amino acid-sensing branch of the mTORC1 signaling pathway. The GATOR2 complex indirectly activates mTORC1 through the inhibition of the GATOR1 subcomplex. GATOR2 probably acts as an E3 ubiquitin-protein ligase toward GATOR1. In the presence of abundant amino acids, the GATOR2 complex mediates ubiquitination of the NPRL2 core component of the GATOR1 complex, leading to GATOR1 inactivation. In the absence of amino acids, GATOR2 is inhibited, activating the GATOR1 complex. In addition to its role in regulation of the mTORC1 complex, promotes the acidification of lysosomes and facilitates autophagic flux. Within the GATOR2 complex, WDR24 constitutes the catalytic subunit that mediates 'Lys-6'-linked ubiquitination of NPRL2. The polypeptide is GATOR2 complex protein WDR24 (Xenopus laevis (African clawed frog)).